The following is a 390-amino-acid chain: MPININKFILDMERFDGTLKKYPEDFIVEEITPEGTVLEVGKEIGFEDVEKWHGSFIHFTVEKTNWNTMDALKQIVRTTKTKRKNFGFAGTKDKFAVTTQRFGCFGLKKEQLENINIKDIVIRDVQKSNKKLRMGDLWGNKFTIKIRGLDLSKKEIKRISDLKLDYVLNYYGIQRFGLIRPITHIVGKFIYERDFESAFYTYCGTPISETGDSLEARQLVDVGEFKKALKLFNRNHDYEKRLIQQYLKYKDFKMAFTALPPQLNSMFVNAYQAYLFNEMINKRFEYGFDAKEGDILEDNTPTGTLIGYNTEFSGGIQGEIEKEIVERENLDLKKFKIEDFGNFYGTRRKMITPIYDFKSSFENDIFELSFKLERGNYATIVTREFTGNLS.

Residue D93 is the Nucleophile of the active site. The TRUD domain maps to 166-353 (YVLNYYGIQR…YGTRRKMITP (188 aa)).

It belongs to the pseudouridine synthase TruD family.

It catalyses the reaction uridine(13) in tRNA = pseudouridine(13) in tRNA. In terms of biological role, could be responsible for synthesis of pseudouridine from uracil-13 in transfer RNAs. In Methanococcus maripaludis (strain C5 / ATCC BAA-1333), this protein is Probable tRNA pseudouridine synthase D.